We begin with the raw amino-acid sequence, 197 residues long: Dephospho-CoA kinase (197 aa).

One can recognise a DPCK domain in the interval 2-197; it reads IIGITGGIAS…SALLLLANPR (196 aa). Residue 10–15 coordinates ATP; sequence ASGKST.

Belongs to the CoaE family.

The protein localises to the cytoplasm. The catalysed reaction is 3'-dephospho-CoA + ATP = ADP + CoA + H(+). It participates in cofactor biosynthesis; coenzyme A biosynthesis; CoA from (R)-pantothenate: step 5/5. In terms of biological role, catalyzes the phosphorylation of the 3'-hydroxyl group of dephosphocoenzyme A to form coenzyme A. This is Dephospho-CoA kinase from Streptococcus pyogenes serotype M1.